Reading from the N-terminus, the 289-residue chain is MALAAARRLLLHAGSRLGRREAVDGARRFANKRVLVETEGPAGVAVMKLRNPPVNSLSLECLTEFTISLEKLENDKSIRGVILTSECPGIFSAGLDLLEMYGRNPAHYAEYWKNVQELWLRLYTSNMILVSAINGASPAGGCLLALCCDYRVMADNPKYTIGLNESLLGIVAPFWFKDMYVNTIGHREAERALQLGTLFSPAEALKVGVVDEVVPEDQVHSKARSVMTKWLAIPDHSRQLTKNMMRKATADNLIKQREADIQNFTSFISKDSIQKSLHMYLEKLKQKKG.

A mitochondrion-targeting transit peptide spans 1-28 (MALAAARRLLLHAGSRLGRREAVDGARR). Lysine 48 is subject to N6-acetyllysine; alternate. Lysine 48 bears the N6-succinyllysine; alternate mark. Residue lysine 71 is modified to N6-succinyllysine. Lysine 76 is subject to N6-acetyllysine. Residues 93 to 97 (AGLDL), glycine 140, and asparagine 164 each bind substrate. Lysine 222, lysine 229, lysine 255, and lysine 270 each carry N6-acetyllysine; alternate. Lysine 222, lysine 229, lysine 255, and lysine 270 each carry N6-succinyllysine; alternate. Lysine 275 carries the post-translational modification N6-succinyllysine. Lysine 283 is modified (N6-acetyllysine; alternate). Position 283 is an N6-succinyllysine; alternate (lysine 283).

This sequence belongs to the enoyl-CoA hydratase/isomerase family. As to quaternary structure, homotrimer.

The protein localises to the mitochondrion matrix. It carries out the reaction a (3Z)-enoyl-CoA = a 4-saturated (2E)-enoyl-CoA. It catalyses the reaction a (3E)-enoyl-CoA = a 4-saturated (2E)-enoyl-CoA. The enzyme catalyses (3Z)-octenoyl-CoA = (2E)-octenoyl-CoA. The catalysed reaction is (2E)-tetradecenoyl-CoA = (3Z)-tetradecenoyl-CoA. It carries out the reaction (3Z)-dodecenoyl-CoA = (2E)-dodecenoyl-CoA. It catalyses the reaction (3Z)-hexenoyl-CoA = (2E)-hexenoyl-CoA. The enzyme catalyses (3Z)-decenoyl-CoA = (2E)-decenoyl-CoA. Its pathway is lipid metabolism; fatty acid beta-oxidation. Key enzyme of fatty acid beta-oxidation. Able to isomerize both 3-cis (3Z) and 3-trans (3E) double bonds into the 2-trans (2E) form in a range of enoyl-CoA species, with a preference for (3Z)-enoyl-CoAs over (3E)-enoyl-CoAs. The catalytic efficiency of this enzyme is not affected by the fatty acyl chain length. This chain is Enoyl-CoA delta isomerase 1, mitochondrial, found in Mus musculus (Mouse).